Consider the following 158-residue polypeptide: Histone H2B.1 (158 aa).

Residues lysine 7 and lysine 25 each carry the N6-acetyllysine modification. 2 disordered regions span residues 26–45 (AAAG…PKKG) and 135–158 (VHNF…GQQT). Residues 135–144 (VHNFESETSK) show a composition bias toward basic and acidic residues. Over residues 147-158 (SQGRKRGRGQQT) the composition is skewed to basic residues.

It belongs to the histone H2B family. As to quaternary structure, the nucleosome is a histone octamer containing two molecules each of H2A, H2B, H3 and H4 assembled in one H3-H4 heterotetramer and two H2A-H2B heterodimers. The octamer wraps approximately 147 bp of DNA. In terms of processing, can be acetylated to form H2BK6ac and H2BK33ac. Expressed in the generative cell within the bicellular pollen. Not detected in other reproductive or vegetative tissues.

It localises to the nucleus. Its subcellular location is the chromosome. Core component of nucleosome. Nucleosomes wrap and compact DNA into chromatin, limiting DNA accessibility to the cellular machineries which require DNA as a template. Histones thereby play a central role in transcription regulation, DNA repair, DNA replication and chromosomal stability. DNA accessibility is regulated via a complex set of post-translational modifications of histones, also called histone code, and nucleosome remodeling. This Lilium longiflorum (Trumpet lily) protein is Histone H2B.1.